The chain runs to 184 residues: Elongation factor P (184 aa).

This sequence belongs to the elongation factor P family.

It localises to the cytoplasm. It participates in protein biosynthesis; polypeptide chain elongation. Involved in peptide bond synthesis. Stimulates efficient translation and peptide-bond synthesis on native or reconstituted 70S ribosomes in vitro. Probably functions indirectly by altering the affinity of the ribosome for aminoacyl-tRNA, thus increasing their reactivity as acceptors for peptidyl transferase. This Polaromonas sp. (strain JS666 / ATCC BAA-500) protein is Elongation factor P.